A 245-amino-acid chain; its full sequence is Small ribosomal subunit protein uS3 (245 aa).

The region spanning 39 to 111 is the KH type-2 domain; that stretch reads IRNFINKNYS…EVFFNVIEIK (73 aa).

It belongs to the universal ribosomal protein uS3 family. As to quaternary structure, part of the 30S ribosomal subunit. Forms a tight complex with proteins S10 and S14.

Its function is as follows. Binds the lower part of the 30S subunit head. Binds mRNA in the 70S ribosome, positioning it for translation. The polypeptide is Small ribosomal subunit protein uS3 (Phytoplasma mali (strain AT)).